Reading from the N-terminus, the 274-residue chain is Large ribosomal subunit protein uL2 (274 aa).

The segment at 224 to 259 (AMNPVDHPHGGGEGRTSGGRHPVTPWGIPTKGYKTR) is disordered.

This sequence belongs to the universal ribosomal protein uL2 family. Part of the 50S ribosomal subunit. Forms a bridge to the 30S subunit in the 70S ribosome.

One of the primary rRNA binding proteins. Required for association of the 30S and 50S subunits to form the 70S ribosome, for tRNA binding and peptide bond formation. It has been suggested to have peptidyltransferase activity; this is somewhat controversial. Makes several contacts with the 16S rRNA in the 70S ribosome. This is Large ribosomal subunit protein uL2 from Geobacter sp. (strain M21).